We begin with the raw amino-acid sequence, 92 residues long: Small ribosomal subunit protein uS19 (92 aa).

This sequence belongs to the universal ribosomal protein uS19 family.

Its function is as follows. Protein S19 forms a complex with S13 that binds strongly to the 16S ribosomal RNA. This is Small ribosomal subunit protein uS19 from Phenylobacterium zucineum (strain HLK1).